A 388-amino-acid polypeptide reads, in one-letter code: Galactokinase (388 aa).

33 to 36 (EHTD) serves as a coordination point for substrate. Residues serine 67 and 124–130 (GAGLSSS) contribute to the ATP site. Serine 130 and glutamate 162 together coordinate Mg(2+). The active-site Proton acceptor is aspartate 174. Position 224 (tyrosine 224) interacts with substrate.

Belongs to the GHMP kinase family. GalK subfamily.

The protein localises to the cytoplasm. The catalysed reaction is alpha-D-galactose + ATP = alpha-D-galactose 1-phosphate + ADP + H(+). Its pathway is carbohydrate metabolism; galactose metabolism. Catalyzes the transfer of the gamma-phosphate of ATP to D-galactose to form alpha-D-galactose-1-phosphate (Gal-1-P). This Lacticaseibacillus casei (strain BL23) (Lactobacillus casei) protein is Galactokinase.